The primary structure comprises 166 residues: MTETTEALENPDNPDAETAAAEVTEAPVEAVPAESYVFERPIQTVGRRKEAVVRVRLVPGTGKFNLNGRTLEGYFPNKVHQQLIKAPLVTVDRVDSFDIYAHLHGGGPSGQAGALRLGIARALILASPDDRPALKKAGFLTRDPRATERKKYGLKKARKAPQYSKR.

The disordered stretch occupies residues 135-166; the sequence is KKAGFLTRDPRATERKKYGLKKARKAPQYSKR. Residues 142–151 show a composition bias toward basic and acidic residues; the sequence is RDPRATERKK. Basic residues predominate over residues 152–166; sequence YGLKKARKAPQYSKR.

Belongs to the universal ribosomal protein uS9 family.

This chain is Small ribosomal subunit protein uS9, found in Mycobacterium avium (strain 104).